Here is a 277-residue protein sequence, read N- to C-terminus: S-formylglutathione hydrolase FrmB (277 aa).

Catalysis depends on charge relay system residues serine 145, aspartate 221, and histidine 254.

Belongs to the esterase D family.

It carries out the reaction S-formylglutathione + H2O = formate + glutathione + H(+). Serine hydrolase involved in the detoxification of formaldehyde. Hydrolyzes S-formylglutathione to glutathione and formate. The sequence is that of S-formylglutathione hydrolase FrmB (frmB) from Escherichia coli O6:K15:H31 (strain 536 / UPEC).